The chain runs to 95 residues: Pyrimidine/purine nucleoside phosphorylase (95 aa).

Belongs to the nucleoside phosphorylase PpnP family.

The catalysed reaction is a purine D-ribonucleoside + phosphate = a purine nucleobase + alpha-D-ribose 1-phosphate. It catalyses the reaction adenosine + phosphate = alpha-D-ribose 1-phosphate + adenine. The enzyme catalyses cytidine + phosphate = cytosine + alpha-D-ribose 1-phosphate. It carries out the reaction guanosine + phosphate = alpha-D-ribose 1-phosphate + guanine. The catalysed reaction is inosine + phosphate = alpha-D-ribose 1-phosphate + hypoxanthine. It catalyses the reaction thymidine + phosphate = 2-deoxy-alpha-D-ribose 1-phosphate + thymine. The enzyme catalyses uridine + phosphate = alpha-D-ribose 1-phosphate + uracil. It carries out the reaction xanthosine + phosphate = alpha-D-ribose 1-phosphate + xanthine. Catalyzes the phosphorolysis of diverse nucleosides, yielding D-ribose 1-phosphate and the respective free bases. Can use uridine, adenosine, guanosine, cytidine, thymidine, inosine and xanthosine as substrates. Also catalyzes the reverse reactions. The polypeptide is Pyrimidine/purine nucleoside phosphorylase (Vibrio cholerae serotype O1 (strain ATCC 39315 / El Tor Inaba N16961)).